Consider the following 127-residue polypeptide: Large ribosomal subunit protein eL18 (127 aa).

The protein belongs to the eukaryotic ribosomal protein eL18 family.

The polypeptide is Large ribosomal subunit protein eL18 (Methanopyrus kandleri (strain AV19 / DSM 6324 / JCM 9639 / NBRC 100938)).